The sequence spans 125 residues: Type-4 ice-structuring protein (125 aa).

The first 20 residues, 1–20 (MKYTLIAAIVVLALAQGTLA), serve as a signal peptide directing secretion.

The protein belongs to the apolipoprotein A1/A4/E family.

It is found in the secreted. Its function is as follows. Antifreeze proteins lower the blood freezing point. The sequence is that of Type-4 ice-structuring protein from Gadus morhua (Atlantic cod).